The following is a 652-amino-acid chain: Beta-glucuronidase (652 aa).

A signal peptide spans 1–22 (MVRGPAGAWAVLGPLLWGCGLA). N-linked (GlcNAc...) asparagine glycans are attached at residues Asn-173 and Asn-420. Glu-451 serves as the catalytic Proton donor. Asn-631 is a glycosylation site (N-linked (GlcNAc...) asparagine).

This sequence belongs to the glycosyl hydrolase 2 family. Homotetramer.

The protein localises to the lysosome. The enzyme catalyses a beta-D-glucuronoside + H2O = D-glucuronate + an alcohol. Inhibited by L-aspartic acid. Its function is as follows. Plays an important role in the degradation of dermatan and keratan sulfates. This chain is Beta-glucuronidase (GUSB), found in Sus scrofa (Pig).